The chain runs to 261 residues: Imidazole glycerol phosphate synthase subunit HisF (261 aa).

Residues Asp-16 and Asp-135 contribute to the active site.

The protein belongs to the HisA/HisF family. In terms of assembly, heterodimer of HisH and HisF.

Its subcellular location is the cytoplasm. The catalysed reaction is 5-[(5-phospho-1-deoxy-D-ribulos-1-ylimino)methylamino]-1-(5-phospho-beta-D-ribosyl)imidazole-4-carboxamide + L-glutamine = D-erythro-1-(imidazol-4-yl)glycerol 3-phosphate + 5-amino-1-(5-phospho-beta-D-ribosyl)imidazole-4-carboxamide + L-glutamate + H(+). It participates in amino-acid biosynthesis; L-histidine biosynthesis; L-histidine from 5-phospho-alpha-D-ribose 1-diphosphate: step 5/9. Functionally, IGPS catalyzes the conversion of PRFAR and glutamine to IGP, AICAR and glutamate. The HisF subunit catalyzes the cyclization activity that produces IGP and AICAR from PRFAR using the ammonia provided by the HisH subunit. This is Imidazole glycerol phosphate synthase subunit HisF from Mycolicibacterium gilvum (strain PYR-GCK) (Mycobacterium gilvum (strain PYR-GCK)).